Reading from the N-terminus, the 149-residue chain is Small ribosomal subunit protein uS19w (149 aa).

This sequence belongs to the universal ribosomal protein uS19 family.

It localises to the cytoplasm. The sequence is that of Small ribosomal subunit protein uS19w (RPS15E) from Arabidopsis thaliana (Mouse-ear cress).